Consider the following 274-residue polypeptide: NADPH-dependent 7-cyano-7-deazaguanine reductase (274 aa).

Val80–Ser82 contributes to the substrate binding site. An NADPH-binding site is contributed by Ser82–Lys83. Cys181 (thioimide intermediate) is an active-site residue. The active-site Proton donor is the Asp188. His220–Glu221 lines the substrate pocket. Arg249–Gly250 contributes to the NADPH binding site.

Belongs to the GTP cyclohydrolase I family. QueF type 2 subfamily. In terms of assembly, homodimer.

The protein localises to the cytoplasm. It catalyses the reaction 7-aminomethyl-7-carbaguanine + 2 NADP(+) = 7-cyano-7-deazaguanine + 2 NADPH + 3 H(+). It participates in tRNA modification; tRNA-queuosine biosynthesis. Catalyzes the NADPH-dependent reduction of 7-cyano-7-deazaguanine (preQ0) to 7-aminomethyl-7-deazaguanine (preQ1). This Burkholderia multivorans (strain ATCC 17616 / 249) protein is NADPH-dependent 7-cyano-7-deazaguanine reductase.